The chain runs to 402 residues: CCA-adding enzyme (402 aa).

Residues G32 and R35 each coordinate ATP. Positions 32 and 35 each coordinate CTP. 2 residues coordinate Mg(2+): D45 and D47. ATP contacts are provided by R116, D159, R162, R165, and R168. CTP contacts are provided by R116, D159, R162, R165, and R168.

The protein belongs to the tRNA nucleotidyltransferase/poly(A) polymerase family. Bacterial CCA-adding enzyme type 3 subfamily. In terms of assembly, homodimer. The cofactor is Mg(2+).

The catalysed reaction is a tRNA precursor + 2 CTP + ATP = a tRNA with a 3' CCA end + 3 diphosphate. It catalyses the reaction a tRNA with a 3' CCA end + 2 CTP + ATP = a tRNA with a 3' CCACCA end + 3 diphosphate. In terms of biological role, catalyzes the addition and repair of the essential 3'-terminal CCA sequence in tRNAs without using a nucleic acid template. Adds these three nucleotides in the order of C, C, and A to the tRNA nucleotide-73, using CTP and ATP as substrates and producing inorganic pyrophosphate. tRNA 3'-terminal CCA addition is required both for tRNA processing and repair. Also involved in tRNA surveillance by mediating tandem CCA addition to generate a CCACCA at the 3' terminus of unstable tRNAs. While stable tRNAs receive only 3'-terminal CCA, unstable tRNAs are marked with CCACCA and rapidly degraded. This chain is CCA-adding enzyme, found in Streptococcus pyogenes serotype M6 (strain ATCC BAA-946 / MGAS10394).